A 228-amino-acid polypeptide reads, in one-letter code: MQLSVTHPCCRTLILLLVSNLLLWESEAVLPICSVRNGRCFGSFEELLERAVSLSEEISKKAFELFTAFDSQYAQSHQLIVKSLKKCHTSSLDLPKPGSQAMQTHPVTLLKLASKLLRAWQVPLNHLVNNLPSLKNVSPSILSKAKEIEEKSNGLLEGVKSILIQMQNGDTEDENYPGWSGLASLKSETEDIRLFAYYNMIRCEGRDTQKVETALKMVKCKISNENNC.

An N-terminal signal peptide occupies residues 1–28 (MQLSVTHPCCRTLILLLVSNLLLWESEA). 2 cysteine pairs are disulfide-bonded: cysteine 87-cysteine 203 and cysteine 220-cysteine 228.

Belongs to the somatotropin/prolactin family. As to expression, expressed specifically in the placenta. Expression restricted to the junctional zone of the chorioallantoic placenta.

The protein resides in the secreted. This Mus musculus (Mouse) protein is Prolactin-2A1 (Prl2a1).